The following is a 104-amino-acid chain: Small ubiquitin-related modifier 3 (104 aa).

Glycyl lysine isopeptide (Lys-Gly) (interchain with G-Cter in SUMO2) cross-links involve residues Lys-5 and Lys-7. A Glycyl lysine isopeptide (Lys-Gly) (interchain with G-Cter in SUMO); alternate cross-link involves residue Lys-11. Residue Lys-11 forms a Glycyl lysine isopeptide (Lys-Gly) (interchain with G-Cter in SUMO2); alternate linkage. Positions 15-92 constitute a Ubiquitin-like domain; the sequence is DHINLKVAGQ…IDVFQQQTGG (78 aa). A Glycyl lysine isopeptide (Gly-Lys) (interchain with K-? in acceptor proteins) cross-link involves residue Gly-92. A propeptide spanning residues 93-104 is cleaved from the precursor; the sequence is SRVASCLLGSGL.

The protein belongs to the ubiquitin family. SUMO subfamily. In terms of assembly, interacts with SAE2 and UBE2I. Covalently attached to a number of proteins. Interacts with USP25 (via ts SIM domain); the interaction sumoylates USP25 and inhibits its ubiquitin hydrolyzing activity. Interacts with BMAL1. In terms of processing, polymeric chains can be formed through Lys-11 cross-linking. Post-translationally, cleavage of precursor form by SENP1, SENP2 or SENP5 is necessary for function.

It localises to the cytoplasm. Its subcellular location is the nucleus. The protein localises to the PML body. Ubiquitin-like protein which can be covalently attached to target lysines either as a monomer or as a lysine-linked polymer. Does not seem to be involved in protein degradation and may function as an antagonist of ubiquitin in the degradation process. Plays a role in a number of cellular processes such as nuclear transport, DNA replication and repair, mitosis and signal transduction. Covalent attachment to its substrates requires prior activation by the E1 complex SAE1-SAE2 and linkage to the E2 enzyme UBE2I, and can be promoted by an E3 ligase such as PIAS1-4, RANBP2 or CBX4. Plays a role in the regulation of sumoylation status of SETX. In Bos taurus (Bovine), this protein is Small ubiquitin-related modifier 3 (SUMO3).